We begin with the raw amino-acid sequence, 408 residues long: UDP-N-acetylglucosamine--N-acetylmuramyl-(pentapeptide) pyrophosphoryl-undecaprenol N-acetylglucosamine transferase (408 aa).

A disordered region spans residues 1-20; sequence MNDTVKKPTGGRGDDPLPAG. UDP-N-acetyl-alpha-D-glucosamine is bound by residues 41–43, N160, R197, S231, and Q327; that span reads TAG.

The protein belongs to the glycosyltransferase 28 family. MurG subfamily.

It is found in the cell membrane. The catalysed reaction is di-trans,octa-cis-undecaprenyl diphospho-N-acetyl-alpha-D-muramoyl-L-alanyl-D-glutamyl-meso-2,6-diaminopimeloyl-D-alanyl-D-alanine + UDP-N-acetyl-alpha-D-glucosamine = di-trans,octa-cis-undecaprenyl diphospho-[N-acetyl-alpha-D-glucosaminyl-(1-&gt;4)]-N-acetyl-alpha-D-muramoyl-L-alanyl-D-glutamyl-meso-2,6-diaminopimeloyl-D-alanyl-D-alanine + UDP + H(+). Its pathway is cell wall biogenesis; peptidoglycan biosynthesis. In terms of biological role, cell wall formation. Catalyzes the transfer of a GlcNAc subunit on undecaprenyl-pyrophosphoryl-MurNAc-pentapeptide (lipid intermediate I) to form undecaprenyl-pyrophosphoryl-MurNAc-(pentapeptide)GlcNAc (lipid intermediate II). This chain is UDP-N-acetylglucosamine--N-acetylmuramyl-(pentapeptide) pyrophosphoryl-undecaprenol N-acetylglucosamine transferase, found in Mycobacterium avium (strain 104).